A 312-amino-acid polypeptide reads, in one-letter code: L-type lectin-like domain-containing protein C126.08c (312 aa).

The signal sequence occupies residues 1–22 (MFFSVKNVFLLGIFGFVLGALA). At 23–280 (ETSHLERLSL…QKKGSFKKRL (258 aa)) the chain is on the extracellular side. The 225-residue stretch at 24–248 (TSHLERLSLE…EIASILSRTI (225 aa)) folds into the L-type lectin-like domain. Residues 281–301 (IILLLSLIVIFSIFALRSYQV) traverse the membrane as a helical segment. Topologically, residues 302 to 312 (QQEKNRRTTVL) are cytoplasmic.

It is found in the membrane. The protein localises to the endoplasmic reticulum. It localises to the golgi apparatus. Its subcellular location is the vacuole. The sequence is that of L-type lectin-like domain-containing protein C126.08c from Schizosaccharomyces pombe (strain 972 / ATCC 24843) (Fission yeast).